Reading from the N-terminus, the 670-residue chain is MGKSEKEVATHGVRCFSKIKAFLLALTCAYVSKSLSGTYMNSMLTQIERQFGIPTSVVGLINGSFEIGNLLLIIFVSYFGTKLHRPIMIGVGCAVMGLGCFLISIPHFLMGRYEYETTILPTSNLSSNSFVCTENRTQTLKPTQDPTECVKEMKSLMWIYVLVGNIIRGMGETPIMPLGISYIEDFAKSENSPLYIGILETGMTIGPLIGLLLGSSCANIYVDTGSVNTDDLTITPTDTRWVGAWWIGFLVCAGVNILTSIPFFFFPKTLLKEGLQDNGDGTENAKEEKHREKIKEENRGITKDFFLFMKSLSCNPIYMIFILISVIQVNAFINSFTFMPKYLEQQYGKSTAEIVFLMGLYMLPPICLGYLIGGLIMKKFKITVKKAAYIGFWLSLTEYLLSFVSYIMTCDNFPVAGLTTSYEGVQHPLYVENNVLADCNTKCSCLTNTWDPVCGDNGLSYMSACLAGCEKSVGTGTNMVFQNCSCIQSSGNASAVLGLCDKGPECANKLQYFLIISIIGCFIFSLGAIPGYMVLLRCMKSEEKSLGVGLHTFCMRILGGIPAPIYFGALIDRTCLHWGTLKCGEPGACRMYDINSFRRIYLGLPAALRGASFLPALFILILMRKFQFPGDIDSSDTDPAEMKLTAKESKCTNVHRSPTMQNDGERKTKL.

Residues 1–20 lie on the Cytoplasmic side of the membrane; it reads MGKSEKEVATHGVRCFSKIK. The helical transmembrane segment at 21–40 threads the bilayer; it reads AFLLALTCAYVSKSLSGTYM. The Extracellular segment spans residues 41–59; the sequence is NSMLTQIERQFGIPTSVVG. The chain crosses the membrane as a helical span at residues 60-80; the sequence is LINGSFEIGNLLLIIFVSYFG. Topologically, residues 81–86 are cytoplasmic; the sequence is TKLHRP. Residues 87–111 traverse the membrane as a helical segment; sequence IMIGVGCAVMGLGCFLISIPHFLMG. Residues 112 to 155 are Extracellular-facing; that stretch reads RYEYETTILPTSNLSSNSFVCTENRTQTLKPTQDPTECVKEMKS. N-linked (GlcNAc...) asparagine glycosylation is found at N124 and N135. Residues 156–184 traverse the membrane as a helical segment; the sequence is LMWIYVLVGNIIRGMGETPIMPLGISYIE. Over 185 to 203 the chain is Cytoplasmic; that stretch reads DFAKSENSPLYIGILETGM. The chain crosses the membrane as a helical span at residues 204–224; it reads TIGPLIGLLLGSSCANIYVDT. Residues 225-242 lie on the Extracellular side of the membrane; it reads GSVNTDDLTITPTDTRWV. The chain crosses the membrane as a helical span at residues 243–267; it reads GAWWIGFLVCAGVNILTSIPFFFFP. At 268-311 the chain is on the cytoplasmic side; that stretch reads KTLLKEGLQDNGDGTENAKEEKHREKIKEENRGITKDFFLFMKS. A helical membrane pass occupies residues 312-333; the sequence is LSCNPIYMIFILISVIQVNAFI. Residues 334–353 are Extracellular-facing; that stretch reads NSFTFMPKYLEQQYGKSTAE. A helical transmembrane segment spans residues 354–377; that stretch reads IVFLMGLYMLPPICLGYLIGGLIM. At 378–381 the chain is on the cytoplasmic side; the sequence is KKFK. Residues 382 to 405 form a helical membrane-spanning segment; it reads ITVKKAAYIGFWLSLTEYLLSFVS. The Extracellular segment spans residues 406–513; that stretch reads YIMTCDNFPV…PECANKLQYF (108 aa). One can recognise a Kazal-like domain in the interval 433–488; the sequence is NNVLADCNTKCSCLTNTWDPVCGDNGLSYMSACLAGCEKSVGTGTNMVFQNCSCIQ. 3 disulfide bridges follow: C439/C469, C445/C465, and C454/C486. N-linked (GlcNAc...) asparagine glycosylation is found at N483 and N492. A helical membrane pass occupies residues 514-536; the sequence is LIISIIGCFIFSLGAIPGYMVLL. At 537–545 the chain is on the cytoplasmic side; the sequence is RCMKSEEKS. Residues 546 to 571 traverse the membrane as a helical segment; that stretch reads LGVGLHTFCMRILGGIPAPIYFGALI. Over 572 to 605 the chain is Extracellular; the sequence is DRTCLHWGTLKCGEPGACRMYDINSFRRIYLGLP. The chain crosses the membrane as a helical span at residues 606 to 623; sequence AALRGASFLPALFILILM. The Cytoplasmic portion of the chain corresponds to 624–670; it reads RKFQFPGDIDSSDTDPAEMKLTAKESKCTNVHRSPTMQNDGERKTKL. S634 and S635 each carry phosphoserine. Residues 649 to 670 form a disordered region; the sequence is SKCTNVHRSPTMQNDGERKTKL. Over residues 651–662 the composition is skewed to polar residues; the sequence is CTNVHRSPTMQN.

This sequence belongs to the organo anion transporter (TC 2.A.60) family. Highly expressed in brain and liver. Detected at very low levels in heart and lung.

Its subcellular location is the cell membrane. The enzyme catalyses estrone 3-sulfate(out) = estrone 3-sulfate(in). The catalysed reaction is taurocholate(out) = taurocholate(in). It carries out the reaction prostaglandin E2(out) = prostaglandin E2(in). It catalyses the reaction L-thyroxine(out) = L-thyroxine(in). In terms of biological role, mediates the Na(+)-independent transport of organic anions such as taurocholate, cholate, 17-beta-glucuronosyl estradiol, prostaglandin E2, estrone 3-sulfate, L-thyroxine (T4), the cardiac glycosides ouabain and digoxin and thyroid hormones. Shows a pH-sensitive substrate specificity which may be ascribed to the protonation state of the binding site and leads to a stimulation of substrate transport in an acidic microenvironment. Hydrogencarbonate/HCO3(-) acts as the probable counteranion that exchanges for organic anions. The chain is Solute carrier organic anion transporter family member 1A4 (Slco1a4) from Mus musculus (Mouse).